A 434-amino-acid polypeptide reads, in one-letter code: Glucose-6-phosphate 1-dehydrogenase (434 aa).

NADP(+) is bound by residues 7-14 (GSSGDLAK), Arg36, Tyr93, and Lys112. D-glucose 6-phosphate is bound by residues Lys112, 137-141 (HYLLK), Glu175, and Asp193. The active-site Proton acceptor is His198. Positions 280 and 285 each coordinate D-glucose 6-phosphate. Arg286 is a binding site for NADP(+).

This sequence belongs to the glucose-6-phosphate dehydrogenase family.

It catalyses the reaction D-glucose 6-phosphate + NADP(+) = 6-phospho-D-glucono-1,5-lactone + NADPH + H(+). The protein operates within carbohydrate degradation; pentose phosphate pathway; D-ribulose 5-phosphate from D-glucose 6-phosphate (oxidative stage): step 1/3. Functionally, catalyzes the rate-limiting step of the oxidative pentose-phosphate pathway, which represents a route for the dissimilation of carbohydrates besides glycolysis. The main function of this enzyme is to provide reducing power (NADPH) and pentose phosphates for fatty acid and nucleic acid synthesis. This is Glucose-6-phosphate 1-dehydrogenase (ZWF1) from Encephalitozoon cuniculi (strain GB-M1) (Microsporidian parasite).